Consider the following 472-residue polypeptide: UDP-N-acetylmuramate--L-alanine ligase (472 aa).

Glycine 122 to threonine 128 lines the ATP pocket.

It belongs to the MurCDEF family.

The protein localises to the cytoplasm. The catalysed reaction is UDP-N-acetyl-alpha-D-muramate + L-alanine + ATP = UDP-N-acetyl-alpha-D-muramoyl-L-alanine + ADP + phosphate + H(+). It participates in cell wall biogenesis; peptidoglycan biosynthesis. In terms of biological role, cell wall formation. This Prochlorococcus marinus (strain SARG / CCMP1375 / SS120) protein is UDP-N-acetylmuramate--L-alanine ligase.